Reading from the N-terminus, the 574-residue chain is M-phase inducer phosphatase 2 (574 aa).

Disordered stretches follow at residues 31-51 (GFGFGSDGLLGSPERAASSSP) and 90-110 (RRTSECSLSSESSESSDAGLC). Phosphoserine is present on S42. The span at 90-105 (RRTSECSLSSESSESS) shows a compositional bias: low complexity. S166 bears the Phosphoserine; by MELK mark. S246 carries the phosphoserine modification. A Phosphoserine; by MAPKAPK2 and MELK modification is found at S319. S319 is modified (phosphoserine; by MELK and MAPK14). The interval 339–359 (DVPVLSKRRKSGTPLEEQQLE) is disordered. Position 349 is a phosphoserine; by AURKA (S349). Position 370 is a phosphoserine; by BRSK1 and MAPK14 (S370). Residues 425 to 532 (IVEKFVIVDC…FFPQHPNFCE (108 aa)) enclose the Rhodanese domain. C481 is a catalytic residue. A Phosphoserine modification is found at S557.

The protein belongs to the MPI phosphatase family. As to quaternary structure, interacts with MAPK14 and 14-3-3 proteins. Post-translationally, phosphorylated by BRSK1 in vitro. Phosphorylated by CHEK1, which inhibits the activity of this protein. Phosphorylation at Ser-349 by AURKA might locally participate in the control of the onset of mitosis. Phosphorylation by MELK at Ser-166 promotes localization to the centrosome and the spindle poles during mitosis. Phosphorylation at Ser-319 and Ser-370 by MAPK14 is required for binding to 14-3-3 proteins.

The protein localises to the cytoplasm. Its subcellular location is the cytoskeleton. It localises to the microtubule organizing center. It is found in the centrosome. The protein resides in the spindle pole. It catalyses the reaction O-phospho-L-tyrosyl-[protein] + H2O = L-tyrosyl-[protein] + phosphate. Its activity is regulated as follows. Stimulated by B-type cyclins. Its function is as follows. Tyrosine protein phosphatase which functions as a dosage-dependent inducer of mitotic progression. Directly dephosphorylates CDK1 and stimulates its kinase activity. Required for G2/M phases of the cell cycle progression and abscission during cytokinesis in a ECT2-dependent manner. The three isoforms seem to have a different level of activity. The protein is M-phase inducer phosphatase 2 (Cdc25b) of Rattus norvegicus (Rat).